Here is a 197-residue protein sequence, read N- to C-terminus: Recombination protein RecR (197 aa).

Residues 55 to 70 (CVQCRDFTESEICTIC) form a C4-type zinc finger. The region spanning 78–173 (QQLCVVESPA…RPSRLAQGMP (96 aa)) is the Toprim domain.

It belongs to the RecR family.

May play a role in DNA repair. It seems to be involved in an RecBC-independent recombinational process of DNA repair. It may act with RecF and RecO. In Xanthomonas euvesicatoria pv. vesicatoria (strain 85-10) (Xanthomonas campestris pv. vesicatoria), this protein is Recombination protein RecR.